Reading from the N-terminus, the 85-residue chain is Small ribosomal subunit protein uS17 (85 aa).

The protein belongs to the universal ribosomal protein uS17 family. As to quaternary structure, part of the 30S ribosomal subunit.

Functionally, one of the primary rRNA binding proteins, it binds specifically to the 5'-end of 16S ribosomal RNA. The chain is Small ribosomal subunit protein uS17 from Blochmanniella floridana.